The primary structure comprises 553 residues: Coiled-coil domain-containing protein 85A (553 aa).

A compositionally biased stretch (low complexity) spans methionine 1 to alanine 28. Residues methionine 1–serine 37 form a disordered region. Coiled-coil stretches lie at residues glutamate 43 to cysteine 109 and methionine 137 to cysteine 169. 3 disordered regions span residues tyrosine 203 to glutamate 414, glutamate 433 to serine 461, and serine 491 to proline 518. Over residues aspartate 209 to aspartate 220 the composition is skewed to low complexity. The span at histidine 236 to glutamine 260 shows a compositional bias: basic and acidic residues. A compositionally biased stretch (gly residues) spans glycine 376–arginine 389. Positions glycine 391–proline 403 are enriched in basic and acidic residues. A coiled-coil region spans residues methionine 412–asparagine 443. A compositionally biased stretch (polar residues) spans glutamine 439–methionine 455. Low complexity predominate over residues serine 491–glycine 508. Arginine 541 carries the post-translational modification Asymmetric dimethylarginine.

This sequence belongs to the CCDC85 family. May interact with ARVCF; CTNND1; CTNND2 and PKP4.

It localises to the cell junction. The protein localises to the adherens junction. May play a role in cell-cell adhesion and epithelium development through its interaction with proteins of the beta-catenin family. This Homo sapiens (Human) protein is Coiled-coil domain-containing protein 85A (CCDC85A).